Reading from the N-terminus, the 363-residue chain is 3-methyl-D-ornithine--L-lysine ligase (363 aa).

ATP is bound at residue lysine 10. An L-lysine-binding site is contributed by 11–12 (LQ). ATP is bound by residues aspartate 31, 49–50 (DV), and 72–73 (EN). L-lysine is bound at residue glutamate 72. The ATP-grasp domain maps to 85–269 (EEFSCPVLFD…LIELLFRAFG (185 aa)). ADP is bound by residues lysine 104, lysine 131, serine 138, and 160-163 (EEYV). D-ornithine-binding positions include 169–171 (SLE) and aspartate 225. Mg(2+)-binding residues include glutamate 227, glutamate 239, and aspartate 241. Residue glutamate 239 coordinates ADP. Residues 243-248 (RFPSQT) and glutamate 302 contribute to the D-ornithine site. Residues serine 246 and glutamate 302 each contribute to the L-lysine site.

It belongs to the PylC family. The cofactor is Mg(2+).

The catalysed reaction is (3R)-3-methyl-D-ornithine + L-lysine + ATP = (3R)-3-methyl-D-ornithyl-N(6)-L-lysine + ADP + phosphate + H(+). The protein operates within amino-acid biosynthesis; L-pyrrolysine biosynthesis. In terms of biological role, is required for the biosynthesis of pyrrolysine. Catalyzes the ATP-dependent ligation between (3R)-3-methyl-D-ornithine and L-lysine, leading to (3R)-3-methyl-D-ornithyl-N6-L-lysine. This chain is 3-methyl-D-ornithine--L-lysine ligase, found in Methanosarcina acetivorans (strain ATCC 35395 / DSM 2834 / JCM 12185 / C2A).